The primary structure comprises 1875 residues: Protein MLP1 (1875 aa).

At Ser2 the chain carries N-acetylserine. Coiled-coil stretches lie at residues Glu69–Leu487 and Glu531–Ser1678. Position 337 is a phosphothreonine (Thr337). Residue Ser379 is modified to Phosphoserine. The short motif at Gln1496 to Ser1565 is the Required for nuclear localization element. The interval Lys1641 to Pro1689 is disordered. Residues Ser1667 to Asn1688 show a composition bias toward polar residues. A phosphoserine mark is found at Ser1670 and Ser1710. A compositionally biased stretch (low complexity) spans Lys1716–Gly1725. The segment at Lys1716–Ile1875 is disordered. Polar residues predominate over residues Pro1728 to His1737. Residue Ser1733 is modified to Phosphoserine. Positions Leu1738–Leu1748 are enriched in basic and acidic residues. Polar residues predominate over residues Thr1787–Val1801. The residue at position 1803 (Ser1803) is a Phosphoserine. 2 stretches are compositionally biased toward basic and acidic residues: residues Thr1807–Lys1840 and Glu1865–Ile1875. A coiled-coil region spans residues Asp1834 to Thr1866.

Component of the nuclear pore complex (NPC). NPC constitutes the exclusive means of nucleocytoplasmic transport. NPCs allow the passive diffusion of ions and small molecules and the active, nuclear transport receptor-mediated bidirectional transport of macromolecules such as proteins, RNAs, ribonucleoparticles (RNPs), and ribosomal subunits across the nuclear envelope. Due to its 8-fold rotational symmetry, all subunits are present with 8 copies or multiples thereof. Interacts with NAB2, a hnRNP required for mRNA export. Interacts with MLP2. Post-translationally, may be phosphorylated by CDC28.

It localises to the nucleus. The protein resides in the nuclear pore complex. In terms of biological role, together with the closely related MLP2, involved in the structural and functional organization of perinuclear chromatin. Together with MLP2, associates with the nuclear pore complex and form filamentous structures along the nuclear periphery. Has a role in the localization of Esc1 to nucleolar regions. Together with MLP2, mediates tethering of the some telomeres to the nuclear periphery, probably mediated by YKU70/YKU80 (HDF1/HDF2) heterodimer and show perinuclear location dependent silencing. MLP1 and MLP2 are involved in telomere length regulation but not silencing or telomere anchoring. Recognizes the 5'-splice site of pre-mRNAs and retains unspliced pre-mRNA in the nucleus without affecting splicing itself. This is Protein MLP1 (MLP1) from Saccharomyces cerevisiae (strain ATCC 204508 / S288c) (Baker's yeast).